Reading from the N-terminus, the 215-residue chain is Uracil phosphoribosyltransferase (215 aa).

5-phospho-alpha-D-ribose 1-diphosphate is bound by residues arginine 84, arginine 109, and 136 to 144; that span reads DPMLATGNT. Uracil contacts are provided by residues isoleucine 198 and 203 to 205; that span reads GDA. Position 204 (aspartate 204) interacts with 5-phospho-alpha-D-ribose 1-diphosphate.

Belongs to the UPRTase family. It depends on Mg(2+) as a cofactor.

It catalyses the reaction UMP + diphosphate = 5-phospho-alpha-D-ribose 1-diphosphate + uracil. It functions in the pathway pyrimidine metabolism; UMP biosynthesis via salvage pathway; UMP from uracil: step 1/1. Its activity is regulated as follows. Allosterically activated by GTP. In terms of biological role, catalyzes the conversion of uracil and 5-phospho-alpha-D-ribose 1-diphosphate (PRPP) to UMP and diphosphate. The sequence is that of Uracil phosphoribosyltransferase from Methanothermobacter thermautotrophicus (strain ATCC 29096 / DSM 1053 / JCM 10044 / NBRC 100330 / Delta H) (Methanobacterium thermoautotrophicum).